A 173-amino-acid polypeptide reads, in one-letter code: Putative phosphoesterase GTNG_0743 (173 aa).

The Proton donor role is filled by His-34. 2 consecutive short sequence motifs (HXTX) follow at residues 34–37 (HITL) and 115–118 (HITI). Residue His-115 is the Proton acceptor of the active site.

This sequence belongs to the 2H phosphoesterase superfamily. YjcG family.

This chain is Putative phosphoesterase GTNG_0743, found in Geobacillus thermodenitrificans (strain NG80-2).